The following is a 654-amino-acid chain: C6 finger domain transcription factor nscR (654 aa).

The segment at residues 17–43 is a DNA-binding region (zn(2)-C6 fungal-type); it reads CELCRERKVKCDKLDPCTNCSSAGVIC.

The protein resides in the nucleus. Its function is as follows. Transcription factor that specifically regulates the neosartoricin B biosynthesis gene cluster. In Trichophyton verrucosum (strain HKI 0517), this protein is C6 finger domain transcription factor nscR.